The chain runs to 392 residues: Chalcone synthase 1 (392 aa).

Residue Cys-167 is part of the active site.

This sequence belongs to the thiolase-like superfamily. Chalcone/stilbene synthases family.

The catalysed reaction is (E)-4-coumaroyl-CoA + 3 malonyl-CoA + 3 H(+) = 2',4,4',6'-tetrahydroxychalcone + 3 CO2 + 4 CoA. Its pathway is secondary metabolite biosynthesis; flavonoid biosynthesis. The primary product of this enzyme is 4,2',4',6'-tetrahydroxychalcone (also termed naringenin-chalcone or chalcone) which can under specific conditions spontaneously isomerize into naringenin. The polypeptide is Chalcone synthase 1 (CHS1) (Secale cereale (Rye)).